Here is a 1029-residue protein sequence, read N- to C-terminus: Tyrosine-protein kinase-like otk (1029 aa).

The N-terminal stretch at 1–18 (MISIYGLVMALMMASVLA) is a signal peptide. The Extracellular portion of the chain corresponds to 19–577 (SSSRFQRVPQ…GGDGFLVTRA (559 aa)). Ig-like C2-type domains follow at residues 21-110 (SRFQ…AKLS), 109-195 (LSVI…RVMS), 247-361 (PEDL…APIS), 364-459 (PGIL…VAIN), and 464-554 (PKFS…VQLV). Asparagine 35 is a glycosylation site (N-linked (GlcNAc...) asparagine). 4 cysteine pairs are disulfide-bonded: cysteine 42/cysteine 91, cysteine 133/cysteine 184, cysteine 272/cysteine 350, and cysteine 395/cysteine 443. N-linked (GlcNAc...) asparagine glycans are attached at residues asparagine 332, asparagine 413, asparagine 425, asparagine 440, asparagine 453, asparagine 508, and asparagine 520. A disulfide bond links cysteine 486 and cysteine 538. Residues 578–598 (VLITMTVALAYIVLVVGLMLW) traverse the membrane as a helical segment. Residues 599–1029 (CRYRRQARKA…LSKAMQSAEK (431 aa)) lie on the Cytoplasmic side of the membrane. 2 disordered regions span residues 613 to 675 (LSTK…KKSA) and 714 to 756 (SPSD…KTSM). The segment covering 651 to 669 (KSSGDAQKSDDTACSQQSR) has biased composition (polar residues). Serine 674 bears the Phosphoserine mark. One can recognise a Protein kinase; inactive domain in the interval 688 to 1024 (LSELIQIGRG…QLGAALSKAM (337 aa)). Residues 716-727 (SDKDADTEKQHS) show a composition bias toward basic and acidic residues.

Belongs to the protein kinase superfamily. Tyr protein kinase family. Insulin receptor subfamily. As to quaternary structure, interacts with plexA; component of a receptor complex that mediates the repulsive signaling in response to Semaphorin ligands.

Its subcellular location is the cell membrane. Functionally, acts as a calcium-dependent, homophilic cell adhesion molecule that regulates neural recognition during the development of the nervous system. Component of the repulsive Plexin signaling response to regulate motor axon guidance at the embryonic stage. Also component of a receptor complex that is required in the adult visual system to innervate the lamina layer; specific targeting of R1-R6 axons. This chain is Tyrosine-protein kinase-like otk, found in Drosophila simulans (Fruit fly).